The primary structure comprises 1226 residues: E3 ubiquitin-protein ligase mind-bomb (1226 aa).

The segment covering M1–D12 has biased composition (polar residues). 2 disordered regions span residues M1–T42 and G66–V87. Over residues S19–A30 the composition is skewed to gly residues. 2 stretches are compositionally biased toward low complexity: residues P31 to T42 and G73 to G86. One can recognise an MIB/HERC2 1 domain in the interval V100–A168. A ZZ-type zinc finger spans residues H174–G226. Zn(2+) is bound by residues C179, C182, C194, C197, C203, C206, H212, and H216. The 79-residue stretch at S237 to A315 folds into the MIB/HERC2 2 domain. ANK repeat units lie at residues A567–I596, D600–A629, R633–L662, E666–L695, N699–E731, D735–R765, N769–I798, and D802–M833. A disordered region spans residues T890–S919. A compositionally biased stretch (low complexity) spans A900–S914. 2 RING-type zinc fingers span residues C970–R1005 and C1017–R1052. Residues V1159–T1181 are a coiled coil. The RING-type 3 zinc-finger motif lies at C1183 to R1216.

As to quaternary structure, interacts with intracellular domain of Dl and Ser. As to expression, ubiquitous in the wing imaginal disk (at protein level).

The protein localises to the cytoplasm. The protein resides in the cell cortex. The catalysed reaction is S-ubiquitinyl-[E2 ubiquitin-conjugating enzyme]-L-cysteine + [acceptor protein]-L-lysine = [E2 ubiquitin-conjugating enzyme]-L-cysteine + N(6)-ubiquitinyl-[acceptor protein]-L-lysine.. The protein operates within protein modification; protein ubiquitination. Functionally, E3 ubiquitin-protein ligase that mediates ubiquitination of Delta (Dl) and Serrate (Ser) receptors, which act as ligands of Notch proteins. Positively regulates the Notch signaling by ubiquitinating the intracellular domain of Dl and Ser, leading to endocytosis of Dl and Ser receptors. Regulates a subset of Notch signaling events, including wing margin specification, leg segmentation and vein determination, that are distinct from those events requiring neuralize (neur) activity. Also modulates lateral inhibition, a neur- and Dl-dependent signaling event, suggesting a distinct but partially complementary function with neur. This is E3 ubiquitin-protein ligase mind-bomb (mib1) from Drosophila melanogaster (Fruit fly).